Consider the following 336-residue polypeptide: Tryptophan--tRNA ligase 1 (336 aa).

Residues 9–11 and 17–18 each bind ATP; these read KPT and GN. The short motif at 10–18 is the 'HIGH' region element; sequence PTGHLTLGN. Asp-137 is a binding site for L-tryptophan. ATP is bound by residues 149–151, Val-188, and 197–201; these read GED and KMGKS. The 'KMSKS' region motif lies at 197 to 201; sequence KMGKS.

Belongs to the class-I aminoacyl-tRNA synthetase family. As to quaternary structure, homodimer.

The protein resides in the cytoplasm. The enzyme catalyses tRNA(Trp) + L-tryptophan + ATP = L-tryptophyl-tRNA(Trp) + AMP + diphosphate + H(+). In terms of biological role, catalyzes the attachment of tryptophan to tRNA(Trp). In Streptomyces coelicolor (strain ATCC BAA-471 / A3(2) / M145), this protein is Tryptophan--tRNA ligase 1.